The sequence spans 319 residues: Acetyl esterase (319 aa).

Residues 91-93 (HGG) carry the Involved in the stabilization of the negatively charged intermediate by the formation of the oxyanion hole motif. Active-site residues include S165, D262, and H292.

The protein belongs to the 'GDXG' lipolytic enzyme family. As to quaternary structure, homodimer. Interacts with MalT and MelA.

The protein resides in the cytoplasm. Displays esterase activity towards short chain fatty esters (acyl chain length of up to 8 carbons). Able to hydrolyze triacetylglycerol (triacetin) and tributyrylglycerol (tributyrin), but not trioleylglycerol (triolein) or cholesterol oleate. Negatively regulates MalT activity by antagonizing maltotriose binding. Inhibits MelA galactosidase activity. This chain is Acetyl esterase, found in Escherichia coli (strain 55989 / EAEC).